The primary structure comprises 625 residues: MSLSSCLLPFSQSATAPSSSVCSCHLAASFSNFPVSSRDYSFSRSGSLVLNGGGSNLCRRFCGLKLWILKSLNRRQGNNRKHQPVNELTTHSKHTFLSDDERGFAEETRAEDLRPEENILGTDLNDGFHNVGDLPPVSKQLSDDLSDVRRRASLCIAVVGATGELARGKIFPALFALYYSGYLPEDVAIFGVSRKNLTDEDLRSIIASTLTCRVDHQENCGGKMDAFQSRTYYINGGYNNRDGMSRLAERMKQIEGESEANRIFYLSVPQEALVDVACTIGDNAQAPRGWTRIIVEKPFGFNSHSSHQLTKSLLSKFEEKQIYRIDHMLGRNLIENLTVLRFSNLVFEPLWNRTYIRNIQVIISESIAQTEKFSDGYGIIRDIVHSHILQTIALLAMEPPISLDGEDIRNEKVKVLRSIRKIDPRDVILGQYKSSSRDKNGVILNGVDPTYCAAALYIDNARWDGVPFLVRVGTGLIKHRVEIHVQFRHVPGNLYRENIGINIDLGTNELILRDEPDEAILVKINNKVPGLGLQLDASELNLLYKDRYKTEVPDSYEHLIHDVIDGDNHLFMRSDEVAAAWNILSPVLEEIDKHHTAPELYEFGGRGPVAAYYLWAKHGVPWADD.

Residues M1–V49 constitute a chloroplast transit peptide. NADP(+) contacts are provided by residues G160–R167 and R194. Residues C212 and C220 are joined by a disulfide bond. K297 contributes to the NADP(+) binding site. D-glucose 6-phosphate-binding positions include K297, H327 to R331, E365, and D382. H387 functions as the Proton acceptor in the catalytic mechanism. NADP(+) is bound by residues R471, R480, R513, and R606.

The protein belongs to the glucose-6-phosphate dehydrogenase family. In terms of assembly, forms homodimer. Interacts with G6PD1. As to expression, expressed in leaves, stems and buds.

It is found in the plastid. Its subcellular location is the chloroplast stroma. Its function is as follows. Seems to be a catalytically inactive enzyme. The polypeptide is Inactive glucose-6-phosphate 1-dehydrogenase 4, chloroplastic (Arabidopsis thaliana (Mouse-ear cress)).